The following is a 69-amino-acid chain: Probable molybdenum-pterin-binding protein (69 aa).

Residues 2 to 68 (KISARNQLKG…IKATSVMVGV (67 aa)) enclose the Mop domain.

To C.pasteurianum MOP proteins.

Its function is as follows. Binds one mole of molybdenum per mole of protein and contains a pterin. In Haemophilus influenzae (strain ATCC 51907 / DSM 11121 / KW20 / Rd), this protein is Probable molybdenum-pterin-binding protein.